The primary structure comprises 395 residues: Elongation factor Tu (395 aa).

The tr-type G domain occupies Lys-10–Val-205. The segment at Gly-19–Thr-26 is G1. GTP is bound at residue Gly-19 to Thr-26. Thr-26 provides a ligand contact to Mg(2+). The segment at Gly-60–Asn-64 is G2. Residues Asp-81–Gly-84 form a G3 region. GTP contacts are provided by residues Asp-81–His-85 and Asn-136–Asp-139. Residues Asn-136–Asp-139 are G4. Residues Ser-173–Phe-175 form a G5 region.

It belongs to the TRAFAC class translation factor GTPase superfamily. Classic translation factor GTPase family. EF-Tu/EF-1A subfamily. In terms of assembly, monomer.

It localises to the cytoplasm. It catalyses the reaction GTP + H2O = GDP + phosphate + H(+). GTP hydrolase that promotes the GTP-dependent binding of aminoacyl-tRNA to the A-site of ribosomes during protein biosynthesis. The protein is Elongation factor Tu of Treponema pallidum (strain Nichols).